We begin with the raw amino-acid sequence, 156 residues long: Mitochondrial translation release factor in rescue (156 aa).

Residues 44–108 (EEELEEQFVR…LREKLEVAYK (65 aa)) are GGQ domain. The GGQ signature appears at 58–60 (GGQ). The stretch at 100–141 (REKLEVAYKGEESELLKMKKESMQKKQDKRRKVNENIEKKRR) forms a coiled coil. Composition is skewed to basic and acidic residues over residues 114–125 (LLKMKKESMQKK) and 132–156 (VNEN…DKST). The interval 114-156 (LLKMKKESMQKKQDKRRKVNENIEKKRRFKEMLNSKQEDDKST) is disordered.

The protein belongs to the prokaryotic/mitochondrial release factor family. As to quaternary structure, interacts (via C-terminus) with MTRES1 (via S4 domain). Associates with mitoribosomal S39 large subunit, peptidyl tRNA and nascent chain.

Its subcellular location is the mitochondrion. Functionally, part of a mitoribosome-associated quality control pathway that prevents aberrant translation by responding to interruptions during elongation. As heterodimer with MTRES1, ejects the unfinished nascent chain and peptidyl transfer RNA (tRNA), respectively, from stalled ribosomes. Recruitment of mitoribosome biogenesis factors to these quality control intermediates suggests additional roles for MTRES1 and MTRF during mitoribosome rescue. This is Mitochondrial translation release factor in rescue (mtrfr) from Danio rerio (Zebrafish).